A 145-amino-acid chain; its full sequence is D-aminoacyl-tRNA deacylase (145 aa).

A Gly-cisPro motif, important for rejection of L-amino acids motif is present at residues 137–138; the sequence is GP.

Belongs to the DTD family. In terms of assembly, homodimer.

It is found in the cytoplasm. The enzyme catalyses glycyl-tRNA(Ala) + H2O = tRNA(Ala) + glycine + H(+). The catalysed reaction is a D-aminoacyl-tRNA + H2O = a tRNA + a D-alpha-amino acid + H(+). In terms of biological role, an aminoacyl-tRNA editing enzyme that deacylates mischarged D-aminoacyl-tRNAs. Also deacylates mischarged glycyl-tRNA(Ala), protecting cells against glycine mischarging by AlaRS. Acts via tRNA-based rather than protein-based catalysis; rejects L-amino acids rather than detecting D-amino acids in the active site. By recycling D-aminoacyl-tRNA to D-amino acids and free tRNA molecules, this enzyme counteracts the toxicity associated with the formation of D-aminoacyl-tRNA entities in vivo and helps enforce protein L-homochirality. In Dinoroseobacter shibae (strain DSM 16493 / NCIMB 14021 / DFL 12), this protein is D-aminoacyl-tRNA deacylase.